The primary structure comprises 588 residues: 2-isopropylmalate synthase (588 aa).

Positions 40–314 (PRWCAVDLRD…DPQIDFSDLD (275 aa)) constitute a Pyruvate carboxyltransferase domain. The Mg(2+) site is built by Asp-49, His-253, His-255, and Asn-289. The regulatory domain stretch occupies residues 456–588 (APLDRVEEKW…TVREPELAAV (133 aa)).

The protein belongs to the alpha-IPM synthase/homocitrate synthase family. LeuA type 2 subfamily. In terms of assembly, homodimer. It depends on Mg(2+) as a cofactor.

It is found in the cytoplasm. The catalysed reaction is 3-methyl-2-oxobutanoate + acetyl-CoA + H2O = (2S)-2-isopropylmalate + CoA + H(+). It participates in amino-acid biosynthesis; L-leucine biosynthesis; L-leucine from 3-methyl-2-oxobutanoate: step 1/4. Catalyzes the condensation of the acetyl group of acetyl-CoA with 3-methyl-2-oxobutanoate (2-ketoisovalerate) to form 3-carboxy-3-hydroxy-4-methylpentanoate (2-isopropylmalate). In Clavibacter michiganensis subsp. michiganensis (strain NCPPB 382), this protein is 2-isopropylmalate synthase.